A 1368-amino-acid chain; its full sequence is DNA-directed RNA polymerase subunit beta (1368 aa).

Belongs to the RNA polymerase beta chain family. The RNAP catalytic core consists of 2 alpha, 1 beta, 1 beta' and 1 omega subunit. When a sigma factor is associated with the core the holoenzyme is formed, which can initiate transcription.

It catalyses the reaction RNA(n) + a ribonucleoside 5'-triphosphate = RNA(n+1) + diphosphate. DNA-dependent RNA polymerase catalyzes the transcription of DNA into RNA using the four ribonucleoside triphosphates as substrates. The protein is DNA-directed RNA polymerase subunit beta of Janthinobacterium sp. (strain Marseille) (Minibacterium massiliensis).